Consider the following 145-residue polypeptide: MRVVVQRTREASVTVAGEVVGQIDHGLMLLVGITHEDTEKEVEFVADKIANLRIFEDEEGKMNFSVLDKGGQILSVSQFTLYGDCRKGRRPNFMAAARPEQAEPLYELFNTKLREKGLQVETGRFGAMMDVRLLNDGPVTLIVES.

The Gly-cisPro motif, important for rejection of L-amino acids signature appears at 137–138 (GP).

Belongs to the DTD family. In terms of assembly, homodimer.

It is found in the cytoplasm. The enzyme catalyses glycyl-tRNA(Ala) + H2O = tRNA(Ala) + glycine + H(+). It carries out the reaction a D-aminoacyl-tRNA + H2O = a tRNA + a D-alpha-amino acid + H(+). An aminoacyl-tRNA editing enzyme that deacylates mischarged D-aminoacyl-tRNAs. Also deacylates mischarged glycyl-tRNA(Ala), protecting cells against glycine mischarging by AlaRS. Acts via tRNA-based rather than protein-based catalysis; rejects L-amino acids rather than detecting D-amino acids in the active site. By recycling D-aminoacyl-tRNA to D-amino acids and free tRNA molecules, this enzyme counteracts the toxicity associated with the formation of D-aminoacyl-tRNA entities in vivo and helps enforce protein L-homochirality. This is D-aminoacyl-tRNA deacylase from Brevibacillus brevis (strain 47 / JCM 6285 / NBRC 100599).